Consider the following 434-residue polypeptide: Alpha-enolase (434 aa).

Residue Ser40 coordinates Mg(2+). Residues His158 and Glu167 each coordinate substrate. Glu210 serves as the catalytic Proton donor. Asp245, Glu293, and Asp318 together coordinate Mg(2+). The substrate site is built by Glu293 and Asp318. Residue Lys343 is the Proton acceptor of the active site. Substrate is bound by residues 370–373 (SHRS) and Lys394.

Belongs to the enolase family. In terms of assembly, homodimer. Mg(2+) serves as cofactor.

Its subcellular location is the cytoplasm. The catalysed reaction is (2R)-2-phosphoglycerate = phosphoenolpyruvate + H2O. The protein operates within carbohydrate degradation; glycolysis; pyruvate from D-glyceraldehyde 3-phosphate: step 4/5. This is Alpha-enolase from Alligator mississippiensis (American alligator).